Reading from the N-terminus, the 406-residue chain is COP9 signalosome complex subunit 4 (406 aa).

Ala-2 carries the post-translational modification N-acetylalanine. An N6-acetyllysine modification is found at Lys-25. The PCI domain maps to 197 to 366 (YRRKFIEAAQ…GIVHFETREA (170 aa)).

The protein belongs to the CSN4 family. As to quaternary structure, component of the CSN complex, composed of COPS1/GPS1, COPS2, COPS3, COPS4, COPS5, COPS6, COPS7 (COPS7A or COPS7B), COPS8 and COPS9. In the complex, it probably interacts directly with COPS1, COPS2, COPS3, COPS5, COPS6, COPS7 (COPS7A or COPS7B) and COPS8. Interacts with TOR1A; the interaction is direct and associates TOR1A and SNAPIN with the CSN complex. Interacts with STON2; controls STON2 neddylation levels. Interacts with ERCC6.

Its subcellular location is the cytoplasm. The protein localises to the nucleus. It is found in the cytoplasmic vesicle. It localises to the secretory vesicle. The protein resides in the synaptic vesicle. Functionally, component of the COP9 signalosome complex (CSN), a complex involved in various cellular and developmental processes. The CSN complex is an essential regulator of the ubiquitin (Ubl) conjugation pathway by mediating the deneddylation of the cullin subunits of SCF-type E3 ligase complexes, leading to decrease the Ubl ligase activity of SCF-type complexes such as SCF, CSA or DDB2. Also involved in the deneddylation of non-cullin subunits such as STON2. The complex is also involved in phosphorylation of p53/TP53, c-jun/JUN, IkappaBalpha/NFKBIA, ITPK1, IRF8/ICSBP and SNAPIN, possibly via its association with CK2 and PKD kinases. CSN-dependent phosphorylation of TP53 and JUN promotes and protects degradation by the Ubl system, respectively. The chain is COP9 signalosome complex subunit 4 (COPS4) from Pongo abelii (Sumatran orangutan).